The following is a 226-amino-acid chain: Oxaloacetate tautomerase FAHD2, mitochondrial (226 aa).

Residues 1 to 30 (MAAAAQRLLAASTKIVGVGRNFVAHAKELG) constitute a mitochondrion transit peptide. Residues Glu69, Glu71, and Asp100 each coordinate Mg(2+).

The protein belongs to the FAH family. It depends on Mg(2+) as a cofactor. Mn(2+) is required as a cofactor.

It localises to the mitochondrion. The catalysed reaction is oxaloacetate = enol-oxaloacetate. Its function is as follows. Tautomerase that converts enol-oxaloacetate, a strong inhibitor of succinate dehydrogenase, to the physiological keto form of oxaloacetate. This Oryza sativa subsp. japonica (Rice) protein is Oxaloacetate tautomerase FAHD2, mitochondrial.